A 465-amino-acid polypeptide reads, in one-letter code: L-seryl-tRNA(Sec) selenium transferase (465 aa).

At lysine 294 the chain carries N6-(pyridoxal phosphate)lysine.

The protein belongs to the SelA family. Requires pyridoxal 5'-phosphate as cofactor.

It is found in the cytoplasm. The enzyme catalyses L-seryl-tRNA(Sec) + selenophosphate + H(+) = L-selenocysteinyl-tRNA(Sec) + phosphate. It functions in the pathway aminoacyl-tRNA biosynthesis; selenocysteinyl-tRNA(Sec) biosynthesis; selenocysteinyl-tRNA(Sec) from L-seryl-tRNA(Sec) (bacterial route): step 1/1. In terms of biological role, converts seryl-tRNA(Sec) to selenocysteinyl-tRNA(Sec) required for selenoprotein biosynthesis. The polypeptide is L-seryl-tRNA(Sec) selenium transferase (Maridesulfovibrio salexigens (strain ATCC 14822 / DSM 2638 / NCIMB 8403 / VKM B-1763) (Desulfovibrio salexigens)).